The sequence spans 487 residues: Glycogen synthase (487 aa).

Residue lysine 15 participates in ADP-alpha-D-glucose binding.

This sequence belongs to the glycosyltransferase 1 family. Bacterial/plant glycogen synthase subfamily.

It carries out the reaction [(1-&gt;4)-alpha-D-glucosyl](n) + ADP-alpha-D-glucose = [(1-&gt;4)-alpha-D-glucosyl](n+1) + ADP + H(+). It functions in the pathway glycan biosynthesis; glycogen biosynthesis. Its function is as follows. Synthesizes alpha-1,4-glucan chains using ADP-glucose. The sequence is that of Glycogen synthase from Leptothrix cholodnii (strain ATCC 51168 / LMG 8142 / SP-6) (Leptothrix discophora (strain SP-6)).